Here is a 144-residue protein sequence, read N- to C-terminus: 3-dehydroquinate dehydratase (144 aa).

Y24 serves as the catalytic Proton acceptor. Positions 73, 79, and 86 each coordinate substrate. Residue H99 is the Proton donor of the active site. Substrate contacts are provided by residues 100-101 and R110; that span reads LS.

Belongs to the type-II 3-dehydroquinase family. In terms of assembly, homododecamer.

The enzyme catalyses 3-dehydroquinate = 3-dehydroshikimate + H2O. It functions in the pathway metabolic intermediate biosynthesis; chorismate biosynthesis; chorismate from D-erythrose 4-phosphate and phosphoenolpyruvate: step 3/7. Functionally, catalyzes a trans-dehydration via an enolate intermediate. The polypeptide is 3-dehydroquinate dehydratase (Shewanella putrefaciens (strain CN-32 / ATCC BAA-453)).